The following is a 359-amino-acid chain: MMP endo-(1,4)-3-O-methyl-alpha-D-mannosidase (359 aa).

In terms of assembly, monomer in solution.

The catalysed reaction is Endohydrolysis of 3-O-methyl-alpha-D-mannosyl-(1-&gt;4)-3-O-methyl-D-mannose linkages within (1,4)-3-O-methyl-alpha-D-mannnan substrates.. Hydrolase involved in the biosynthesis of 3-O-methylmannose polysaccharides (MMP), which are intracellular polymethylated polysaccharides implicated in the modulation of fatty acid metabolism in non-tuberculous mycobacteria. Highly specific hydrolase that catalyzes the internal cleavage of MMP. Is able to hydrolyze purified MMP into distinct lower order oligomannosides but does not cleave acylated or deacylated forms of 6-O-methylglucose lipopolysaccharide (MGLP), beta-mannans, synthetic 4alpha-oligomannosides or its own reaction products. Products were identified as four distinct oligomannosides differing in the number of mannose units (4 to 8) and methylation pattern (free or methylated C1-OH). Might serve as a recycling enzyme that hydrolyzes mature MMP into defined-size smaller oligomannosides that are, in turn, substrates for ManT and MeT1 activities for further processing into new daughter MMP chains. This chain is MMP endo-(1,4)-3-O-methyl-alpha-D-mannosidase, found in Mycolicibacterium hassiacum (strain DSM 44199 / CIP 105218 / JCM 12690 / 3849) (Mycobacterium hassiacum).